The chain runs to 152 residues: 3-hydroxyacyl-[acyl-carrier-protein] dehydratase FabZ (152 aa).

Residue histidine 58 is part of the active site.

Belongs to the thioester dehydratase family. FabZ subfamily.

Its subcellular location is the cytoplasm. It catalyses the reaction a (3R)-hydroxyacyl-[ACP] = a (2E)-enoyl-[ACP] + H2O. Functionally, involved in unsaturated fatty acids biosynthesis. Catalyzes the dehydration of short chain beta-hydroxyacyl-ACPs and long chain saturated and unsaturated beta-hydroxyacyl-ACPs. In Prochlorococcus marinus (strain MIT 9215), this protein is 3-hydroxyacyl-[acyl-carrier-protein] dehydratase FabZ.